Consider the following 146-residue polypeptide: uncharacterized protein (146 aa).

The 140-residue stretch at 7-146 (LEINYKTDEL…EGHDVLLWKP (140 aa)) folds into the N-acetyltransferase domain.

This is an uncharacterized protein from Staphylococcus aureus (strain COL).